Here is a 534-residue protein sequence, read N- to C-terminus: Sodium-dependent lysophosphatidylcholine symporter 1 (534 aa).

Topologically, residues 1–39 are cytoplasmic; it reads MAKGEGAESGSAAGLLPTSILQASERPVQVKKEPKKKQQ. The helical transmembrane segment at 40–69 threads the bilayer; it reads LSICNKLCYAVGGAPYQLTGCALGFFLQIY. The Extracellular portion of the chain corresponds to 70–80; the sequence is LLDVAKVEPLP. A helical transmembrane segment spans residues 81-101; the sequence is ASIILFVGRAWDAFTDPLVGF. The Cytoplasmic portion of the chain corresponds to 102–113; it reads CISKSSWTRLGR. Residues 114-133 form a helical membrane-spanning segment; that stretch reads LMPWIIFSTPLAIIAYFLIW. Residues 134–148 lie on the Extracellular side of the membrane; the sequence is FVPDFPSGTESSHGF. A helical membrane pass occupies residues 149 to 173; it reads LWYLLFYCLFETLVTCFHVPYSALT. The Cytoplasmic portion of the chain corresponds to 174–180; it reads MFISTEQ. Residues 181 to 212 traverse the membrane as a helical segment; the sequence is SERDSATAYRMTVEVLGTVIGTAIQGQIVGQA. At 213-232 the chain is on the extracellular side; sequence KAPCLQDQNGSVVVSEVANR. A disulfide bond links cysteine 216 and cysteine 464. 2 N-linked (GlcNAc...) asparagine glycosylation sites follow: asparagine 221 and asparagine 231. Residues 233–266 form a helical membrane-spanning segment; that stretch reads TQSTASLKDTQNAYLLAAGIIASIYVLCAFILIL. The Cytoplasmic segment spans residues 267-297; it reads GVREQRELYESQQAESMPFFQGLRLVMGHGP. The helical transmembrane segment at 298-324 threads the bilayer; it reads YVKLIAGFLFTSLAFMLVEGNFALFCT. Topologically, residues 325–335 are extracellular; the sequence is YTLDFRNEFQN. Residues 336–354 traverse the membrane as a helical segment; that stretch reads LLLAIMLSATFTIPIWQWF. Residues 355 to 358 lie on the Cytoplasmic side of the membrane; it reads LTRF. Residues 359–380 traverse the membrane as a helical segment; it reads GKKTAVYIGISSAVPFLILVAL. The Extracellular portion of the chain corresponds to 381 to 383; that stretch reads MER. A helical membrane pass occupies residues 384-420; that stretch reads NLIVTYVVAVAAGVSVAAAFLLPWSMLPDVIDDFHLK. Over 421-430 the chain is Cytoplasmic; the sequence is HPHSPGTEPI. The chain crosses the membrane as a helical span at residues 431–457; the sequence is FFSFYVFFTKFASGVSLGVSTLSLDFA. Topologically, residues 458–469 are extracellular; that stretch reads NYQRQGCSQPEQ. A helical membrane pass occupies residues 470-493; that stretch reads VKFTLKMLVTMAPIILILLGLLLF. Topologically, residues 494–534 are cytoplasmic; that stretch reads KLYPIDEEKRRQNKKALQALREEASSSGCSDTDSTELASIL.

Belongs to the major facilitator superfamily. N-glycosylated. Widely expressed. Exhibits an oscillatory pattern of expression in brown adipose tissue and liver consistent with a circadian rhythm. Enriched in brain micro-vessels, where it is specifically present in endothelium constituting the blood-brain barrier (at protein level).

Its subcellular location is the cell membrane. It is found in the endoplasmic reticulum membrane. It carries out the reaction a 1-acyl-sn-glycero-3-phosphocholine(in) + Na(+)(in) = a 1-acyl-sn-glycero-3-phosphocholine(out) + Na(+)(out). The catalysed reaction is 1-(4Z,7Z,10Z,13Z,16Z,19Z-docosahexaenoyl)-sn-glycero-3-phosphocholine(in) + Na(+)(in) = 1-(4Z,7Z,10Z,13Z,16Z,19Z-docosahexaenoyl)-sn-glycero-3-phosphocholine(out) + Na(+)(out). The enzyme catalyses 1-(9Z-octadecenoyl)-sn-glycero-3-phosphocholine(in) + Na(+)(in) = 1-(9Z-octadecenoyl)-sn-glycero-3-phosphocholine(out) + Na(+)(out). It catalyses the reaction 1-hexadecanoyl-sn-glycero-3-phosphocholine(in) + Na(+)(in) = 1-hexadecanoyl-sn-glycero-3-phosphocholine(out) + Na(+)(out). It carries out the reaction a 1-acyl-sn-glycero-3-phosphoethanolamine(in) + Na(+)(in) = a 1-acyl-sn-glycero-3-phosphoethanolamine(out) + Na(+)(out). In terms of biological role, sodium-dependent lysophosphatidylcholine (LPC) symporter, which plays an essential role for blood-brain barrier formation and function. Specifically expressed in endothelium of the blood-brain barrier of micro-vessels and transports LPC into the brain. Transport of LPC is essential because it constitutes the major mechanism by which docosahexaenoic acid (DHA), an omega-3 fatty acid that is essential for normal brain growth and cognitive function, enters the brain. Transports LPC carrying long-chain fatty acids such LPC oleate and LPC palmitate with a minimum acyl chain length of 14 carbons. Does not transport docosahexaenoic acid in unesterified fatty acid. Not required for central nervous system vascular morphogenesis. The polypeptide is Sodium-dependent lysophosphatidylcholine symporter 1 (Mus musculus (Mouse)).